The chain runs to 575 residues: Homocysteine/cysteine synthase (575 aa).

At K376 the chain carries N6-(pyridoxal phosphate)lysine.

The protein belongs to the trans-sulfuration enzymes family. MET7 subfamily. Requires pyridoxal 5'-phosphate as cofactor.

The protein resides in the cytoplasm. It catalyses the reaction O-acetyl-L-homoserine + methanethiol = L-methionine + acetate + H(+). The enzyme catalyses O-acetyl-L-homoserine + hydrogen sulfide = L-homocysteine + acetate. The catalysed reaction is O-acetyl-L-serine + hydrogen sulfide = L-cysteine + acetate. The protein operates within amino-acid biosynthesis; L-methionine biosynthesis via de novo pathway; L-homocysteine from O-acetyl-L-homoserine. Functionally, plays a role in inorganic sulfur assimilation during sulfur-limited conditions; catalyzes the conversion of O-acetyl-L-homoserine (OAH) into homocysteine in the methionine biosynthesis pathway. Also catalyzes the conversion of O-acetylserine (OAS) into cysteine, the last step in the cysteine biosynthesis pathway. However, it seems that in S.cerevisiae cysteine biosynthesis occurs exclusively through the cystathionine pathway and not via direct incorporation of sulfur into OAS. It therefore has no metabolic role in cysteine biosynthesis and may only have a regulatory role controlling OAS levels. This Saccharomyces cerevisiae (strain ATCC 204508 / S288c) (Baker's yeast) protein is Homocysteine/cysteine synthase.